Reading from the N-terminus, the 138-residue chain is Small ribosomal subunit protein uS11c (138 aa).

Positions 1-23 are disordered; that stretch reads MAKPILRIGSRKNTRSSSRKNVR. A compositionally biased stretch (basic residues) spans 9-23; the sequence is GSRKNTRSSSRKNVR.

This sequence belongs to the universal ribosomal protein uS11 family. In terms of assembly, part of the 30S ribosomal subunit.

The protein resides in the plastid. It is found in the chloroplast. This chain is Small ribosomal subunit protein uS11c, found in Nasturtium officinale (Watercress).